The primary structure comprises 407 residues: Multifunctional CCA protein (407 aa).

Positions 8 and 11 each coordinate ATP. Residues glycine 8 and arginine 11 each coordinate CTP. Mg(2+) is bound by residues aspartate 21 and aspartate 23. ATP-binding residues include arginine 91, arginine 137, and arginine 140. CTP is bound by residues arginine 91, arginine 137, and arginine 140. Residues 228 to 329 enclose the HD domain; that stretch reads TGMHTLMVSQ…IKIFDKMDLW (102 aa).

Belongs to the tRNA nucleotidyltransferase/poly(A) polymerase family. Bacterial CCA-adding enzyme type 1 subfamily. Monomer. Can also form homodimers and oligomers. The cofactor is Mg(2+). It depends on Ni(2+) as a cofactor.

The catalysed reaction is a tRNA precursor + 2 CTP + ATP = a tRNA with a 3' CCA end + 3 diphosphate. It carries out the reaction a tRNA with a 3' CCA end + 2 CTP + ATP = a tRNA with a 3' CCACCA end + 3 diphosphate. Catalyzes the addition and repair of the essential 3'-terminal CCA sequence in tRNAs without using a nucleic acid template. Adds these three nucleotides in the order of C, C, and A to the tRNA nucleotide-73, using CTP and ATP as substrates and producing inorganic pyrophosphate. tRNA 3'-terminal CCA addition is required both for tRNA processing and repair. Also involved in tRNA surveillance by mediating tandem CCA addition to generate a CCACCA at the 3' terminus of unstable tRNAs. While stable tRNAs receive only 3'-terminal CCA, unstable tRNAs are marked with CCACCA and rapidly degraded. The sequence is that of Multifunctional CCA protein from Aliivibrio salmonicida (strain LFI1238) (Vibrio salmonicida (strain LFI1238)).